We begin with the raw amino-acid sequence, 497 residues long: Cobyrinate a,c-diamide synthase (497 aa).

In terms of domain architecture, GATase cobBQ-type spans 273–478 (RIGIALDEAF…AHLHGVAYRE (206 aa)). Residue Cys-355 is the Nucleophile of the active site.

This sequence belongs to the CobB/CbiA family. Mg(2+) serves as cofactor.

It catalyses the reaction cob(II)yrinate + 2 L-glutamine + 2 ATP + 2 H2O = cob(II)yrinate a,c diamide + 2 L-glutamate + 2 ADP + 2 phosphate + 2 H(+). The catalysed reaction is Ni-sirohydrochlorin + 2 L-glutamine + 2 ATP + 2 H2O = Ni-sirohydrochlorin a,c-diamide + 2 L-glutamate + 2 ADP + 2 phosphate + 2 H(+). It functions in the pathway cofactor biosynthesis; adenosylcobalamin biosynthesis; cob(II)yrinate a,c-diamide from sirohydrochlorin (anaerobic route): step 10/10. Its function is as follows. Catalyzes the ATP-dependent amidation of the two carboxylate groups at positions a and c of cobyrinate, using either L-glutamine or ammonia as the nitrogen source (Potential). Involved in the biosynthesis of the unique nickel-containing tetrapyrrole coenzyme F430, the prosthetic group of methyl-coenzyme M reductase (MCR), which plays a key role in methanogenesis and anaerobic methane oxidation. Catalyzes the ATP-dependent amidation of the two carboxylate groups at positions a and c of Ni-sirohydrochlorin, using L-glutamine or ammonia as the nitrogen source. In Methanosarcina acetivorans (strain ATCC 35395 / DSM 2834 / JCM 12185 / C2A), this protein is Cobyrinate a,c-diamide synthase.